The primary structure comprises 368 residues: Chaperone protein DnaJ (368 aa).

The region spanning 5-70 is the J domain; it reads DYYQVLGVPR…KKRKLYDTHG (66 aa). The CR-type zinc finger occupies 124-201; it reads GVERQIQIPT…CNGAGRVEDH (78 aa). Positions 137, 140, 153, 156, 175, 178, 189, and 192 each coordinate Zn(2+). 4 CXXCXGXG motif repeats span residues 137-144, 153-160, 175-182, and 189-196; these read CTHCHGSG, CGTCRGSG, CPHCGGRG, and CKVCNGAG.

Belongs to the DnaJ family. In terms of assembly, homodimer. The cofactor is Zn(2+).

Its subcellular location is the cytoplasm. Participates actively in the response to hyperosmotic and heat shock by preventing the aggregation of stress-denatured proteins and by disaggregating proteins, also in an autonomous, DnaK-independent fashion. Unfolded proteins bind initially to DnaJ; upon interaction with the DnaJ-bound protein, DnaK hydrolyzes its bound ATP, resulting in the formation of a stable complex. GrpE releases ADP from DnaK; ATP binding to DnaK triggers the release of the substrate protein, thus completing the reaction cycle. Several rounds of ATP-dependent interactions between DnaJ, DnaK and GrpE are required for fully efficient folding. Also involved, together with DnaK and GrpE, in the DNA replication of plasmids through activation of initiation proteins. The protein is Chaperone protein DnaJ of Xylella fastidiosa (strain 9a5c).